The chain runs to 246 residues: Uridylate kinase (246 aa).

Residue 20–23 (KISG) participates in ATP binding. Positions 28–33 (GDQGYG) are involved in allosteric activation by GTP. A UMP-binding site is contributed by Gly-62. Gly-63 and Arg-67 together coordinate ATP. UMP contacts are provided by residues Asp-82 and 143–150 (TGNPYFTT). The ATP site is built by Thr-170, Tyr-176, and Asp-179.

The protein belongs to the UMP kinase family. As to quaternary structure, homohexamer.

It is found in the cytoplasm. It catalyses the reaction UMP + ATP = UDP + ADP. It functions in the pathway pyrimidine metabolism; CTP biosynthesis via de novo pathway; UDP from UMP (UMPK route): step 1/1. Allosterically activated by GTP. Inhibited by UTP. Catalyzes the reversible phosphorylation of UMP to UDP. The chain is Uridylate kinase from Cereibacter sphaeroides (strain ATCC 17029 / ATH 2.4.9) (Rhodobacter sphaeroides).